We begin with the raw amino-acid sequence, 1206 residues long: Translocase of chloroplast 132, chloroplastic (1206 aa).

At Gly2 the chain carries N-acetylglycine. A coiled-coil region spans residues 13 to 33; the sequence is REDKKLAEDRISDEQVVKNEL. 2 disordered regions span residues 33-75 and 97-119; these read LVRS…SDDL and VGDL…VGES. Residues 39-49 are compositionally biased toward acidic residues; it reads VRDDNEDEVFE. Phosphoserine is present on Ser195. The interval 233–499 is disordered; it reads QTEQEVEEGE…TTTEADEHDE (267 aa). Residues 309 to 324 are compositionally biased toward polar residues; it reads AYTSNIVTNASGDNEV. Over residues 325–336 the composition is skewed to low complexity; that stretch reads SSAVTSSPLEES. Residues Ser337, Ser363, and Ser398 each carry the phosphoserine modification. Over residues 357–379 the composition is skewed to polar residues; it reads LASSPHSYPESTEVHSNSGSPGV. Positions 403-427 are enriched in basic and acidic residues; that stretch reads KELEKQQSSRVHVDPEITENSHVET. Over residues 430-440 the composition is skewed to low complexity; that stretch reads EVVSSVSPTES. Positions 468–492 are enriched in polar residues; that stretch reads APQQSRVNGNGSHNQFQQAEDSTTT. Residues 572–801 enclose the AIG1-type G domain; the sequence is DFSCTIMVLG…KLQDNIPGRP (230 aa). The tract at residues 581–588 is G1; that stretch reads GKSGVGKS. GTP-binding positions include 584–589 and 603–608; these read GVGKSA and DAFQMG. Ser588 contributes to the Mg(2+) binding site. A homodimerization region spans residues 603–606; it reads DAFQ. The tract at residues 607–611 is G2; it reads MGTKR. The G3 stretch occupies residues 628 to 631; that stretch reads DTPG. Residues 666–671 form a homodimerization region; the sequence is RLDMQS. Residues 700–703 are G4; it reads THAA. GTP contacts are provided by residues His701 and 749-750; that span reads EN. The interval 749-751 is G5; that stretch reads ENH. The segment at 824 to 862 is disordered; it reads QPKLPEQQYGDEEDEDDLEESSDSDEESEYDQLPPFKSL. Acidic residues predominate over residues 832–853; it reads YGDEEDEDDLEESSDSDEESEY. The helical transmembrane segment at 1182–1199 threads the bilayer; it reads LAMVAIVPLFKKLLSYYY.

Belongs to the TRAFAC class TrmE-Era-EngA-EngB-Septin-like GTPase superfamily. AIG1/Toc34/Toc159-like paraseptin GTPase family. TOC159 subfamily. As to quaternary structure, homodimer. Part of the TOC core complex that includes 1 protein for the specific recognition of transit peptides surrounded by a ring composed of four proteins forming translocation channels, and four to five GTP-binding proteins providing energy. This core complex can interact with components of the TIC complex to form a larger import complex. Chloroplastic protein precursor such as prSS (precursor of the RuBisCO small subunit) interacts with these complexes. The TOC complex contains a specific subset of polar lipids such as digalactosyldiacylglyceride (DGDG), phosphatidylcholine (PC) and phosphatidylglycerol (PG). It depends on Mg(2+) as a cofactor. Phosphorylated by KOC1. Expressed in seedlings, leaves, flowers, and roots.

The protein localises to the plastid. The protein resides in the chloroplast outer membrane. It is found in the cytoplasm. Functionally, GTPase involved in protein precursor import into chloroplasts. Seems to recognize chloroplast-destined precursor proteins and regulate their presentation to the translocation channel through GTP hydrolysis. Probably specialized in the import of nuclear encoded non-photosynthetic preproteins from the cytoplasm to the chloroplast. The sequence is that of Translocase of chloroplast 132, chloroplastic from Arabidopsis thaliana (Mouse-ear cress).